We begin with the raw amino-acid sequence, 254 residues long: Probable septum site-determining protein MinC (254 aa).

This sequence belongs to the MinC family. In terms of assembly, interacts with MinD and FtsZ.

In terms of biological role, cell division inhibitor that blocks the formation of polar Z ring septums. Rapidly oscillates between the poles of the cell to destabilize FtsZ filaments that have formed before they mature into polar Z rings. Prevents FtsZ polymerization. This is Probable septum site-determining protein MinC from Burkholderia ambifaria (strain ATCC BAA-244 / DSM 16087 / CCUG 44356 / LMG 19182 / AMMD) (Burkholderia cepacia (strain AMMD)).